A 378-amino-acid chain; its full sequence is Carbamoyl phosphate synthase small chain (378 aa).

The segment at 1–188 (MLPSFPPAIL…LGRGYGVQDK (188 aa)) is CPSase. Ser50, Gly240, and Gly242 together coordinate L-glutamine. A Glutamine amidotransferase type-1 domain is found at 192 to 378 (HVVAYDFGVK…FTAAMAERKQ (187 aa)). Cys268 (nucleophile) is an active-site residue. L-glutamine contacts are provided by Leu269, Gln272, Asn310, Gly312, and Phe313. Catalysis depends on residues His352 and Glu354.

The protein belongs to the CarA family. Composed of two chains; the small (or glutamine) chain promotes the hydrolysis of glutamine to ammonia, which is used by the large (or ammonia) chain to synthesize carbamoyl phosphate. Tetramer of heterodimers (alpha,beta)4.

The catalysed reaction is hydrogencarbonate + L-glutamine + 2 ATP + H2O = carbamoyl phosphate + L-glutamate + 2 ADP + phosphate + 2 H(+). It catalyses the reaction L-glutamine + H2O = L-glutamate + NH4(+). Its pathway is amino-acid biosynthesis; L-arginine biosynthesis; carbamoyl phosphate from bicarbonate: step 1/1. It functions in the pathway pyrimidine metabolism; UMP biosynthesis via de novo pathway; (S)-dihydroorotate from bicarbonate: step 1/3. In terms of biological role, small subunit of the glutamine-dependent carbamoyl phosphate synthetase (CPSase). CPSase catalyzes the formation of carbamoyl phosphate from the ammonia moiety of glutamine, carbonate, and phosphate donated by ATP, constituting the first step of 2 biosynthetic pathways, one leading to arginine and/or urea and the other to pyrimidine nucleotides. The small subunit (glutamine amidotransferase) binds and cleaves glutamine to supply the large subunit with the substrate ammonia. This is Carbamoyl phosphate synthase small chain from Ralstonia nicotianae (strain ATCC BAA-1114 / GMI1000) (Ralstonia solanacearum).